A 105-amino-acid polypeptide reads, in one-letter code: Dynein axonemal light chain 4 (105 aa).

The protein belongs to the dynein light chain family. Consists of at least two heavy chains and a number of intermediate and light chains.

The protein localises to the cytoplasm. It is found in the cytoskeleton. It localises to the cilium axoneme. In terms of biological role, force generating protein of respiratory cilia. Produces force towards the minus ends of microtubules. Dynein has ATPase activity. This Bos taurus (Bovine) protein is Dynein axonemal light chain 4 (DNAL4).